The primary structure comprises 733 residues: 2'-5'-oligoadenylate synthase 2 (733 aa).

The N-myristoyl glycine moiety is linked to residue glycine 2. 2 OAS domain regions span residues 47-365 and 373-713; these read VPSQ…CWDV and TPSH…WKVP. Lysine 408 is subject to N6-acetyllysine. Serine 427 contacts ATP. Positions 439, 441, and 510 each coordinate Mg(2+). 2 residues coordinate ATP: arginine 574 and lysine 577.

This sequence belongs to the 2-5A synthase family. Homodimer. It depends on Mg(2+) as a cofactor. In terms of processing, myristoylation is not essential for its activity. Glycosylated. Glycosylation is essential for its activity.

It is found in the cytoplasm. The protein localises to the perinuclear region. The catalysed reaction is 3 ATP = 5'-triphosphoadenylyl-(2'-&gt;5')-adenylyl-(2'-&gt;5')-adenosine + 2 diphosphate. With respect to regulation, produced as a latent enzyme which is activated by double stranded RNA (dsRNA) generated during the course of viral infection. The dsRNA activator must be at least 15 nucleotides long, and no modification of the 2'-hydroxyl group is tolerated. ssRNA or dsDNA do not act as activators. Strongly inhibited by copper, iron and zinc ions. Partially inhibited by cobalt and nickel ions. Its function is as follows. Interferon-induced, dsRNA-activated antiviral enzyme which plays a critical role in cellular innate antiviral response. Activated by detection of double stranded RNA (dsRNA): polymerizes higher oligomers of 2'-5'-oligoadenylates (2-5A) from ATP which then bind to the inactive monomeric form of ribonuclease L (RNASEL) leading to its dimerization and subsequent activation. Activation of RNASEL leads to degradation of cellular as well as viral RNA, resulting in the inhibition of protein synthesis, thus terminating viral replication. Can mediate the antiviral effect via the classical RNASEL-dependent pathway or an alternative antiviral pathway independent of RNASEL. In addition, it may also play a role in other cellular processes such as apoptosis, cell growth, differentiation and gene regulation. May act as a negative regulator of lactation, stopping lactation in virally infected mammary gland lobules, thereby preventing transmission of viruses to neonates. Non-infected lobules would not be affected, allowing efficient pup feeding during infection. The protein is 2'-5'-oligoadenylate synthase 2 (Oas2) of Rattus norvegicus (Rat).